A 289-amino-acid polypeptide reads, in one-letter code: 33 kDa chaperonin (289 aa).

2 cysteine pairs are disulfide-bonded: cysteine 225/cysteine 227 and cysteine 258/cysteine 261.

It belongs to the HSP33 family. Under oxidizing conditions two disulfide bonds are formed involving the reactive cysteines. Under reducing conditions zinc is bound to the reactive cysteines and the protein is inactive.

It is found in the cytoplasm. Functionally, redox regulated molecular chaperone. Protects both thermally unfolding and oxidatively damaged proteins from irreversible aggregation. Plays an important role in the bacterial defense system toward oxidative stress. This Nitrosococcus oceani (strain ATCC 19707 / BCRC 17464 / JCM 30415 / NCIMB 11848 / C-107) protein is 33 kDa chaperonin.